The sequence spans 250 residues: MSQVAKAAATTAVNPGPDGKGKGTPSTGTAPAPGPTPVPASVPRPAAKVGELPPGSYRLVVFEQENFQGRRVEFSGECLNLGDRGFDRVRSLIVLSGPWVAFEQSAFRGEMFVLEKGEYPRWDTWTSSYRSDRLMSFRPIRMDSQEHKICLFEGANFKGNTMEIQEDDVPSLWVYGFCDRVGSITVSSGTWVGYQYPGYRGYQYLLEPGDFRHWNEWGAFQPQMQAVRRLRDRQWHQEGCFPVLTAEPPK.

Positions Met-1–Ala-47 are disordered. Position 2 is an N-acetylserine (Ser-2). Residues Ser-2–Ser-56 form an N-terminal arm region. Residues Ala-32–Val-42 are compositionally biased toward pro residues. Beta/gamma crystallin 'Greek key' domains are found at residues Tyr-57–Ser-96 and Gly-97–Arg-141. The connecting peptide stretch occupies residues Met-142–Glu-146. 2 Beta/gamma crystallin 'Greek key' domains span residues His-147–Ser-188 and Gly-189–Arg-231. The segment at Arg-233–Lys-250 is C-terminal arm.

The protein belongs to the beta/gamma-crystallin family. As to quaternary structure, homo/heterodimer, or complexes of higher-order. The structure of beta-crystallin oligomers seems to be stabilized through interactions between the N-terminal arms. Post-translationally, specific cleavages in the N-terminal arm occur during lens maturation and give rise to truncated forms, leading to impaired oligomerization and protein insolubilization. The protease responsible for this partial degradation could be calpain II.

Functionally, crystallins are the dominant structural components of the vertebrate eye lens. This Rattus norvegicus (Rat) protein is Beta-crystallin B1 (Crybb1).